An 84-amino-acid chain; its full sequence is Small ribosomal subunit protein bS18A (84 aa).

Belongs to the bacterial ribosomal protein bS18 family. In terms of assembly, part of the 30S ribosomal subunit. Forms a tight heterodimer with protein bS6.

Its function is as follows. Binds as a heterodimer with protein bS6 to the central domain of the 16S rRNA, where it helps stabilize the platform of the 30S subunit. The polypeptide is Small ribosomal subunit protein bS18A (Mycobacterium marinum (strain ATCC BAA-535 / M)).